The sequence spans 399 residues: MGSIRGDLQPLFVMPPPPLDEDCDDIFNSDESSWGLLSLSCFGIIMGLWFFASVCLIFGVYGSETVWLGPNSSILVKPSSIFVKSINAKELDFSKPGLQLYGFNGQSTPSGYFVNWTESRVLSVSQNSYKGWPYYLNRGTHMNISYNILPKGSAVRLVITEGMPFFYRSSLKDIAFRDTAWSWNLIQGSGMIQLDISKSKGYYLTVANLKRKDVEVELDIDVKVVLYDTKQSSYNCSFSNGECSFKMNERSPVENYAVVTSPALGQGVSIDDEWYIELSYQPRLIAYGSFTGVLLSFMLVAIHFCNKLKCCGGEGFLSEDDSVRTCLLADKGDNDCCNDVEASNKSLCAICFDAPRDCCFLPCGHCVSCYQCGTKIKRTKGRCPICRKKIMHVKRIYTA.

The next 2 membrane-spanning stretches (helical) occupy residues 42-62 and 284-304; these read FGII…GVYG and LIAY…AIHF. The RING-type zinc-finger motif lies at 348–387; sequence CAICFDAPRDCCFLPCGHCVSCYQCGTKIKRTKGRCPICR.

As to expression, expressed in the shoot apical meristems (SAM), root tips and inflorescences.

Its subcellular location is the endomembrane system. It localises to the vacuole membrane. It catalyses the reaction S-ubiquitinyl-[E2 ubiquitin-conjugating enzyme]-L-cysteine + [acceptor protein]-L-lysine = [E2 ubiquitin-conjugating enzyme]-L-cysteine + N(6)-ubiquitinyl-[acceptor protein]-L-lysine.. The protein operates within protein modification; protein ubiquitination. Functionally, involved in pollen mitosis II (PMII) regulation during male gametogenesis. The chain is E3 ubiquitin-protein ligase APD4 from Arabidopsis thaliana (Mouse-ear cress).